The primary structure comprises 502 residues: MSDLRETRLEKAASLRKVGKDPYALNFHPTHKTAELQSDHKDLPNGQDREIKVAVAGRVLSRRVMGKLAFFTLLDESGSIQLFLEKATLEEFDTSENQVSSFKQITDFVDAGDWLGVNGILRRTDRGELSIKVHSWKILCKSLQPLPDKWHGLADIEKRYRQRYLDLVVNPDSRKTFRRRALTVSAIRRWLDERSFLEIETPVLQSAAGGADARPFITHHNTFDIPLFLRIATELHLKRLVVGGFERVYELGRIFRNEGISTRHNPEFTSVEIYQAFADYNQMMDLTEELISSVCIEICGSTKISYQDVSLDLTPPWRRVTMQELVLEATGIDFDNFDGDQEKASSEMINLGLEVPSTADSVGRLMNEAFEQKVEPNLIQPTFVIDYPIDISPLARKHRCKEDMVERFELFIAGRETANAFSELIDPIDQRERLLAQQIRKNEGDIEAHSLDEDFLNALEVGMPPTGGLGIGIDRLVMLLTDSPSIRDVIAFPLLRPDSGSQ.

Mg(2+) contacts are provided by E409 and E416.

This sequence belongs to the class-II aminoacyl-tRNA synthetase family. In terms of assembly, homodimer. Requires Mg(2+) as cofactor.

It is found in the cytoplasm. It catalyses the reaction tRNA(Lys) + L-lysine + ATP = L-lysyl-tRNA(Lys) + AMP + diphosphate. The sequence is that of Lysine--tRNA ligase from Prochlorococcus marinus (strain SARG / CCMP1375 / SS120).